The sequence spans 20 residues: 23 kDa cell wall protein (20 aa).

It is found in the secreted. Its subcellular location is the cell wall. The polypeptide is 23 kDa cell wall protein (Arabidopsis thaliana (Mouse-ear cress)).